The chain runs to 383 residues: Sphingosine kinase 1 (383 aa).

The DAGKc domain occupies proline 12 to serine 159. ATP contacts are provided by residues asparagine 22–arginine 24 and threonine 54–asparagine 58. Substrate is bound at residue serine 79 to glycine 82. The Proton donor/acceptor role is filled by aspartate 81. Residues glutamate 86 and glycine 111–glycine 113 contribute to the ATP site. 2 short sequence motifs (nuclear export signal) span residues leucine 147–leucine 155 and arginine 161–leucine 169. Substrate is bound at residue aspartate 178. Residues arginine 185 and arginine 191 each coordinate ATP. Position 193 is a phosphothreonine (threonine 193). Serine 225 carries the post-translational modification Phosphoserine. Position 340–342 (aspartate 340–glutamate 342) interacts with ATP. Residues glycine 363–isoleucine 383 form a disordered region. The span at aspartate 372 to isoleucine 383 shows a compositional bias: basic and acidic residues.

In terms of assembly, interacts with ACY1. Binds to calmodulin. Interacts with SPHKAP. Interacts with CIB1, the interaction occurs in a calcium-dependent manner. Interacts with TRAF2. Interacts with EEF1A1; the interaction enhances SPHK1 kinase activity. It depends on Mg(2+) as a cofactor. As to expression, expressed in microglia (at protein level).

It is found in the cytoplasm. The protein resides in the nucleus. Its subcellular location is the cell membrane. It localises to the endosome membrane. The protein localises to the membrane. It is found in the clathrin-coated pit. The protein resides in the synapse. The enzyme catalyses a sphingoid base + ATP = a sphingoid 1-phosphate + ADP + H(+). It carries out the reaction L-seryl-[protein] + acetyl-CoA = O-acetyl-L-seryl-[protein] + CoA. It catalyses the reaction sphinganine + ATP = sphinganine 1-phosphate + ADP + H(+). The catalysed reaction is sphing-4-enine + ATP = sphing-4-enine 1-phosphate + ADP + H(+). The enzyme catalyses 1-O-hexadecyl-2-amino-sn-glycerol + ATP = 1-O-hexadecyl-2-desoxy-2-amino-sn-glycero-3-phosphate + ADP + H(+). With respect to regulation, acetyltransferase activity increases in presence of the kinase substrate, sphingosine. In Purkinje cells, kinase activity on sphingosine increases in presence of VEGFA. In neurons, kinase activity increases during the first 24h in presence of Amyloid-beta protein 42 to decrease after 96h. Its function is as follows. Catalyzes the phosphorylation of sphingosine to form sphingosine 1-phosphate (SPP), a lipid mediator with both intra- and extracellular functions. Also acts on D-erythro-sphingosine and to a lesser extent sphinganine, but not other lipids, such as D,L-threo-dihydrosphingosine, N,N-dimethylsphingosine, diacylglycerol, ceramide, or phosphatidylinositol. In contrast to proapoptotic SPHK2, has a negative effect on intracellular ceramide levels, enhances cell growth and inhibits apoptosis. Involved in the regulation of inflammatory response and neuroinflammation. Via the product sphingosine 1-phosphate, stimulates TRAF2 E3 ubiquitin ligase activity, and promotes activation of NF-kappa-B in response to TNF signaling leading to IL17 secretion. In response to TNF and in parallel to NF-kappa-B activation, negatively regulates RANTES induction through p38 MAPK signaling pathway. Involved in endocytic membrane trafficking induced by sphingosine, recruited to dilate endosomes, also plays a role on later stages of endosomal maturation and membrane fusion independently of its kinase activity. In Purkinje cells, seems to be also involved in the regulation of autophagosome-lysosome fusion upon VEGFA. Functionally, has serine acetyltransferase activity on PTGS2/COX2 in an acetyl-CoA dependent manner. The acetyltransferase activity increases in presence of the kinase substrate, sphingosine. During neuroinflammation, through PTGS2 acetylation, promotes neuronal secretion of specialized preresolving mediators (SPMs), especially 15-R-lipoxin A4, which results in an increase of phagocytic microglia. The sequence is that of Sphingosine kinase 1 (Sphk1) from Rattus norvegicus (Rat).